The following is a 196-amino-acid chain: UMP-CMP kinase (196 aa).

ATP is bound at residue 13–18 (GAGKGT). Phosphoserine is present on serine 33. Positions 33 to 63 (SAGELLRDERKNPDSQYGELIEKYIKDGKIV) are NMP. Residue arginine 39 coordinates a ribonucleoside 5'-phosphate. Lysine 43 and lysine 55 each carry N6-acetyllysine. A ribonucleoside 5'-phosphate contacts are provided by residues 61–63 (KIV) and 93–96 (GFPR). Asparagine 100 contacts CMP. Lysine 106 is modified (N6-succinyllysine). Residues 133-143 (ERGKSSGRSDD) are LID. An ATP-binding site is contributed by arginine 134. A ribonucleoside 5'-phosphate is bound by residues arginine 140 and arginine 151. Residue lysine 179 participates in ATP binding. Position 180 is a phosphoserine (serine 180).

This sequence belongs to the adenylate kinase family. UMP-CMP kinase subfamily. Monomer. The cofactor is Mg(2+).

The protein localises to the nucleus. It localises to the cytoplasm. It catalyses the reaction CMP + ATP = CDP + ADP. The enzyme catalyses dCMP + ATP = dCDP + ADP. It carries out the reaction UMP + ATP = UDP + ADP. The catalysed reaction is a 2'-deoxyribonucleoside 5'-diphosphate + ATP = a 2'-deoxyribonucleoside 5'-triphosphate + ADP. It catalyses the reaction a ribonucleoside 5'-diphosphate + ATP = a ribonucleoside 5'-triphosphate + ADP. Catalyzes the phosphorylation of pyrimidine nucleoside monophosphates at the expense of ATP. Plays an important role in de novo pyrimidine nucleotide biosynthesis. Has preference for UMP and CMP as phosphate acceptors. Also displays broad nucleoside diphosphate kinase activity. In Bos taurus (Bovine), this protein is UMP-CMP kinase.